Here is a 499-residue protein sequence, read N- to C-terminus: Serine/threonine-protein kinase RHS3 (499 aa).

The disordered stretch occupies residues 1 to 92 (MLLKPGNKLV…NSSKPHTGGD (92 aa)). Basic and acidic residues predominate over residues 39–55 (QKQVEQNTKKIEEHQIK). Positions 63 to 85 (SNHNVNMSSQSNNSESTSTNNSS) are enriched in low complexity. The 324-residue stretch at 113–436 (FRVLKRLGYG…ATEIKQHPFF (324 aa)) folds into the Protein kinase domain. ATP is bound by residues 119-127 (LGYGDIGSV) and Lys144. Asp240 serves as the catalytic Proton acceptor. Residues 437–499 (EGVNWALIRG…DPDYIVFEYF (63 aa)) enclose the AGC-kinase C-terminal domain.

The protein belongs to the protein kinase superfamily. AGC Ser/Thr protein kinase family. In terms of assembly, interacts with PDPK1/PDK1. In terms of processing, autophosphorylated and phosphorylated by PDPK1/PDK1. As to expression, specifically expressed in root hair cells.

The enzyme catalyses L-seryl-[protein] + ATP = O-phospho-L-seryl-[protein] + ADP + H(+). The catalysed reaction is L-threonyl-[protein] + ATP = O-phospho-L-threonyl-[protein] + ADP + H(+). Activated by PDPK1/PDK1. Its function is as follows. Involved in root hair growth and morphogenesis. This is Serine/threonine-protein kinase RHS3 from Arabidopsis thaliana (Mouse-ear cress).